The following is a 148-amino-acid chain: Large ribosomal subunit protein bL9 (148 aa).

It belongs to the bacterial ribosomal protein bL9 family.

Binds to the 23S rRNA. This is Large ribosomal subunit protein bL9 from Geobacter metallireducens (strain ATCC 53774 / DSM 7210 / GS-15).